We begin with the raw amino-acid sequence, 155 residues long: Small ribosomal subunit protein uS9 (155 aa).

Belongs to the universal ribosomal protein uS9 family.

In Rhizobium meliloti (strain 1021) (Ensifer meliloti), this protein is Small ribosomal subunit protein uS9.